The chain runs to 390 residues: DNA replication and repair protein RecF (390 aa).

30 to 37 (GDNAQGKS) lines the ATP pocket.

Belongs to the RecF family.

Its subcellular location is the cytoplasm. In terms of biological role, the RecF protein is involved in DNA metabolism; it is required for DNA replication and normal SOS inducibility. RecF binds preferentially to single-stranded, linear DNA. It also seems to bind ATP. The protein is DNA replication and repair protein RecF of Trichodesmium erythraeum (strain IMS101).